A 345-amino-acid chain; its full sequence is Phosphoribosylformylglycinamidine cyclo-ligase (345 aa).

It belongs to the AIR synthase family.

The protein localises to the cytoplasm. It catalyses the reaction 2-formamido-N(1)-(5-O-phospho-beta-D-ribosyl)acetamidine + ATP = 5-amino-1-(5-phospho-beta-D-ribosyl)imidazole + ADP + phosphate + H(+). The protein operates within purine metabolism; IMP biosynthesis via de novo pathway; 5-amino-1-(5-phospho-D-ribosyl)imidazole from N(2)-formyl-N(1)-(5-phospho-D-ribosyl)glycinamide: step 2/2. The polypeptide is Phosphoribosylformylglycinamidine cyclo-ligase (Shewanella oneidensis (strain ATCC 700550 / JCM 31522 / CIP 106686 / LMG 19005 / NCIMB 14063 / MR-1)).